Here is a 456-residue protein sequence, read N- to C-terminus: Protein odr-4 homolog (456 aa).

Low complexity predominate over residues 374 to 401; sequence IESSKNNNNNNNNNNNNNNNNNNNNSKL. The disordered stretch occupies residues 374–403; it reads IESSKNNNNNNNNNNNNNNNNNNNNSKLSN. Residues 436 to 456 traverse the membrane as a helical segment; that stretch reads YLIIIISVLVLMVAFYFKFFV.

It belongs to the ODR-4 family.

It is found in the membrane. Its function is as follows. May play a role in the trafficking of a subset of G-protein coupled receptors. The sequence is that of Protein odr-4 homolog from Dictyostelium discoideum (Social amoeba).